Consider the following 306-residue polypeptide: Ornithine carbamoyltransferase, anabolic (306 aa).

Carbamoyl phosphate-binding positions include 46-49 (STRT), Gln-73, Arg-97, and 124-127 (HPTQ). L-ornithine-binding positions include Asn-156, Asp-220, and 224–225 (SM). Carbamoyl phosphate contacts are provided by residues 260–261 (CL) and Arg-288.

It belongs to the aspartate/ornithine carbamoyltransferase superfamily. OTCase family. As to quaternary structure, homohexamer; dimer of trimers.

Its subcellular location is the cytoplasm. It catalyses the reaction carbamoyl phosphate + L-ornithine = L-citrulline + phosphate + H(+). It functions in the pathway amino-acid biosynthesis; L-arginine biosynthesis; L-arginine from L-ornithine and carbamoyl phosphate: step 1/3. In terms of biological role, reversibly catalyzes the transfer of the carbamoyl group from carbamoyl phosphate (CP) to the N(epsilon) atom of ornithine (ORN) to produce L-citrulline, which is a substrate for argininosuccinate synthetase (ArgG) involved in the final step in arginine biosynthesis. This Campylobacter jejuni subsp. jejuni serotype O:2 (strain ATCC 700819 / NCTC 11168) protein is Ornithine carbamoyltransferase, anabolic.